The sequence spans 255 residues: MRGRVKNYILEKIREHGAIHMTLIDPEKTTPEVAARIAREVAEAGTSAIMVGGSIGVSEAMTDEVVLAIKRSTEVPVILFPGSPTALSRHADAVWFLSVLNSQNPYFITGAQMQGAPIVKRYGLEVLPLGYIIVGEGGAVSIVSYTRPLPFAKPEVVAAYALAAEYMGFQFVYLEGGSGGEPVPPKIVKMVKGVTTLPLIVGGGIRSPEVAKELAKAGADIIVTGTIVEESENIRETIGRIVRATREGALERSRE.

Mg(2+) is bound by residues Asp-25 and Ser-54. Sn-glycerol 1-phosphate contacts are provided by residues 173-179 (YLEGGSG), 203-204 (GG), and 225-226 (GT).

This sequence belongs to the GGGP/HepGP synthase family. Group II subfamily. The cofactor is Mg(2+).

The protein resides in the cytoplasm. The enzyme catalyses sn-glycerol 1-phosphate + (2E,6E,10E)-geranylgeranyl diphosphate = sn-3-O-(geranylgeranyl)glycerol 1-phosphate + diphosphate. It participates in membrane lipid metabolism; glycerophospholipid metabolism. In terms of biological role, prenyltransferase that catalyzes the transfer of the geranylgeranyl moiety of geranylgeranyl diphosphate (GGPP) to the C3 hydroxyl of sn-glycerol-1-phosphate (G1P). This reaction is the first ether-bond-formation step in the biosynthesis of archaeal membrane lipids. The polypeptide is Geranylgeranylglyceryl phosphate synthase (Thermofilum pendens (strain DSM 2475 / Hrk 5)).